We begin with the raw amino-acid sequence, 100 residues long: Large ribosomal subunit protein uL23 (100 aa).

The protein belongs to the universal ribosomal protein uL23 family. In terms of assembly, part of the 50S ribosomal subunit. Contacts protein L29, and trigger factor when it is bound to the ribosome.

One of the early assembly proteins it binds 23S rRNA. One of the proteins that surrounds the polypeptide exit tunnel on the outside of the ribosome. Forms the main docking site for trigger factor binding to the ribosome. The protein is Large ribosomal subunit protein uL23 of Synechococcus sp. (strain CC9902).